The following is a 95-amino-acid chain: Aspartyl/glutamyl-tRNA(Asn/Gln) amidotransferase subunit C (95 aa).

It belongs to the GatC family. In terms of assembly, heterotrimer of A, B and C subunits.

It carries out the reaction L-glutamyl-tRNA(Gln) + L-glutamine + ATP + H2O = L-glutaminyl-tRNA(Gln) + L-glutamate + ADP + phosphate + H(+). It catalyses the reaction L-aspartyl-tRNA(Asn) + L-glutamine + ATP + H2O = L-asparaginyl-tRNA(Asn) + L-glutamate + ADP + phosphate + 2 H(+). In terms of biological role, allows the formation of correctly charged Asn-tRNA(Asn) or Gln-tRNA(Gln) through the transamidation of misacylated Asp-tRNA(Asn) or Glu-tRNA(Gln) in organisms which lack either or both of asparaginyl-tRNA or glutaminyl-tRNA synthetases. The reaction takes place in the presence of glutamine and ATP through an activated phospho-Asp-tRNA(Asn) or phospho-Glu-tRNA(Gln). This Campylobacter curvus (strain 525.92) protein is Aspartyl/glutamyl-tRNA(Asn/Gln) amidotransferase subunit C.